A 45-amino-acid polypeptide reads, in one-letter code: Photosystem II reaction center protein K (45 aa).

The propeptide occupies 1–8 (MITAIIIA). Residues 23–43 (ILPVIPIFFLLLAFVWQAAIG) form a helical membrane-spanning segment.

It belongs to the PsbK family. In terms of assembly, PSII is composed of 1 copy each of membrane proteins PsbA, PsbB, PsbC, PsbD, PsbE, PsbF, PsbH, PsbI, PsbJ, PsbK, PsbL, PsbM, PsbT, PsbX, PsbY, PsbZ, Psb30/Ycf12, at least 3 peripheral proteins of the oxygen-evolving complex and a large number of cofactors. It forms dimeric complexes.

Its subcellular location is the plastid. It is found in the chloroplast thylakoid membrane. In terms of biological role, one of the components of the core complex of photosystem II (PSII). PSII is a light-driven water:plastoquinone oxidoreductase that uses light energy to abstract electrons from H(2)O, generating O(2) and a proton gradient subsequently used for ATP formation. It consists of a core antenna complex that captures photons, and an electron transfer chain that converts photonic excitation into a charge separation. In Gracilaria tenuistipitata var. liui (Red alga), this protein is Photosystem II reaction center protein K.